Consider the following 932-residue polypeptide: DNA mismatch repair protein MutS (932 aa).

615-622 is a binding site for ATP; it reads GPNMAGKS.

It belongs to the DNA mismatch repair MutS family.

Its function is as follows. This protein is involved in the repair of mismatches in DNA. It is possible that it carries out the mismatch recognition step. This protein has a weak ATPase activity. The protein is DNA mismatch repair protein MutS of Clostridium botulinum (strain Langeland / NCTC 10281 / Type F).